Here is an 82-residue protein sequence, read N- to C-terminus: Turripeptide OL139 (82 aa).

The interval 58–82 is disordered; the sequence is HRTTRDTADKTHGGSQRDRFFQSIA.

In terms of processing, contains 6 disulfide bonds. As to expression, expressed by the venom duct.

The protein localises to the secreted. Acts as a neurotoxin by inhibiting an ion channel. This Iotyrris olangoensis (Sea snail) protein is Turripeptide OL139.